We begin with the raw amino-acid sequence, 292 residues long: 4-diphosphocytidyl-2-C-methyl-D-erythritol kinase (292 aa).

Lys-20 is an active-site residue. Residue 103 to 113 coordinates ATP; it reads PMGGGIGGGSS. Residue Asp-145 is part of the active site.

Belongs to the GHMP kinase family. IspE subfamily.

It catalyses the reaction 4-CDP-2-C-methyl-D-erythritol + ATP = 4-CDP-2-C-methyl-D-erythritol 2-phosphate + ADP + H(+). It functions in the pathway isoprenoid biosynthesis; isopentenyl diphosphate biosynthesis via DXP pathway; isopentenyl diphosphate from 1-deoxy-D-xylulose 5-phosphate: step 3/6. In terms of biological role, catalyzes the phosphorylation of the position 2 hydroxy group of 4-diphosphocytidyl-2C-methyl-D-erythritol. The protein is 4-diphosphocytidyl-2-C-methyl-D-erythritol kinase of Cupriavidus taiwanensis (strain DSM 17343 / BCRC 17206 / CCUG 44338 / CIP 107171 / LMG 19424 / R1) (Ralstonia taiwanensis (strain LMG 19424)).